The following is a 239-amino-acid chain: Transcription factor MYB10 (239 aa).

HTH myb-type domains lie at 11–63 (KSQV…INYL) and 64–118 (RPGL…KKRL). 2 DNA-binding regions (H-T-H motif) span residues 39 to 63 (WRSL…INYL) and 91 to 114 (WSKI…NTHL).

In terms of tissue distribution, expressed in cauline leaves and siliques.

The protein localises to the nucleus. Its function is as follows. Involved in metal ions homeostasis, including iron ions (Fe) acquisition, via the regulation of NAS4 and NAS2 genes expression. Necessary for plant survival in alkaline soil where iron availability is greatly restricted. Triggers tolerance to nickel (Ni) and zinc (Zn) ions. The polypeptide is Transcription factor MYB10 (Arabidopsis thaliana (Mouse-ear cress)).